Reading from the N-terminus, the 274-residue chain is Outer surface protein A (274 aa).

The first 16 residues, 1–16, serve as a signal peptide directing secretion; sequence MKKYLLGIGLILALIA. Cys17 carries N-palmitoyl cysteine lipidation. Cys17 carries S-diacylglycerol cysteine lipidation.

This sequence belongs to the OspA lipoprotein family.

The protein resides in the cell outer membrane. The protein localises to the cell surface. The chain is Outer surface protein A from Borreliella burgdorferi (Lyme disease spirochete).